The primary structure comprises 141 residues: Hemoglobin subunit alpha-A (141 aa).

In terms of domain architecture, Globin spans 1–141 (VLSASDKSNV…VGTVLTAKYR (141 aa)). His58 contacts O2. Residue His87 coordinates heme b.

Belongs to the globin family. As to quaternary structure, heterotetramer of two alpha chains and two beta chains. As to expression, red blood cells.

Involved in oxygen transport from the lung to the various peripheral tissues. The polypeptide is Hemoglobin subunit alpha-A (HBAA) (Streptopelia orientalis (Eastern turtle dove)).